The sequence spans 84 residues: U4-theraphotoxin-Hhn1a (84 aa).

The N-terminal stretch at 1 to 22 (MKVTLIAIPTCAAVLVLHTTAA) is a signal peptide. A propeptide spanning residues 23–47 (EELEESQLMEVGMPDTELAAVDEER) is cleaved from the precursor. Intrachain disulfides connect C51–C65, C55–C76, and C70–C81.

Belongs to the neurotoxin 12 (Hwtx-2) family. 02 (Hwtx-2) subfamily. In terms of tissue distribution, expressed by the venom gland.

The protein resides in the secreted. Postsynaptic neurotoxin. The chain is U4-theraphotoxin-Hhn1a from Cyriopagopus hainanus (Chinese bird spider).